A 367-amino-acid chain; its full sequence is MTAEYTKPVRRITNTEDLEIWNGSQAYSTILDFVQDLQDSVVGLTNDAQVTVSSSSEELLKVLDKVNEIIENNPVVHEKDISRFGKIEFRDFYDEICKKSFDILKPLVEKLEDDPRIELATYFNESWGNRTRIDYGSGHELNFIAFLACLQKLGIIKHEDYPCVIVRVFTKYMTVMRALQKLYWLEPAGSHGVWGLDDYHFLPFLFGSSQLATHPHMKPKSIHNEELVESFYKQYMYLECIHFINTIKTTPANQDQKLSLRWHSPMLDDISSAKSWAKIKEGMIKMYKAEVLGKLPIVQHFMFGSIIPCPDGVSEYHEHDDDSDCGHDHGGTVNTWGDCCGIKIPSALAASEMNKINNPNNKPIPFD.

Belongs to the PTPA-type PPIase family.

The protein resides in the cytoplasm. The enzyme catalyses [protein]-peptidylproline (omega=180) = [protein]-peptidylproline (omega=0). Its function is as follows. PPIases accelerate the folding of proteins. It catalyzes the cis-trans isomerization of proline imidic peptide bonds in oligopeptides. Acts as a regulatory subunit for PP2A-like phosphatases modulating their activity or substrate specificity, probably by inducing a conformational change in the catalytic subunit, a direct target of the PPIase. Can reactivate inactive phosphatase PP2A-phosphatase methylesterase complexes (PP2Ai) in presence of ATP and Mg(2+) by dissociating the inactive form from the complex. The sequence is that of Serine/threonine-protein phosphatase 2A activator 2 (RRD2) from Debaryomyces hansenii (strain ATCC 36239 / CBS 767 / BCRC 21394 / JCM 1990 / NBRC 0083 / IGC 2968) (Yeast).